Reading from the N-terminus, the 252-residue chain is Cysteine-rich repeat secretory protein 38 (252 aa).

Residues 1-27 form the signal peptide; sequence MSSLKRIVWFPILAIAIQILSIHTVLS. Gnk2-homologous domains follow at residues 34-136 and 142-248; these read FLFH…STNF and FENR…IYPF.

The protein belongs to the cysteine-rich repeat secretory protein family.

The protein localises to the secreted. The polypeptide is Cysteine-rich repeat secretory protein 38 (CRRSP38) (Arabidopsis thaliana (Mouse-ear cress)).